Consider the following 337-residue polypeptide: PGGVCLLLLLLCQFMEDRSAQAGNCWLRQAKNGRCQVLYKTELSKEECCSTGRLSTSWTEEDVNDNTLFKWMIFNGGAPNCIPCKETCENVDCGPGKKCRMNKKNKPRCVCAPDCSNITWKGPVCGLDGKTYRNECALLKARCKEQPELEVQYQGKCKKTCRDVFCPGSSTCVVDQTNNAYCVTCNRICPEPTSSEQYLCGNDGVTYPSACHLRKATCLLGRSIGLAYEGKCIKAKSCEDIQCTGGKKCLWDFKVGRGRCSLCGELCPESKSEEPVCASDNATYASECAMKEAACSSGVLLEVKHSGSCNSISEDTEDEEEDEDQDYSFPISSILEW.

Residues 1–22 form the signal peptide; sequence PGGVCLLLLLLCQFMEDRSAQA. The TB domain maps to 23 to 96; it reads GNCWLRQAKN…TCENVDCGPG (74 aa). Intrachain disulfides connect Cys25–Cys48, Cys35–Cys81, Cys49–Cys84, Cys88–Cys99, Cys93–Cys109, Cys111–Cys143, Cys115–Cys136, Cys125–Cys157, Cys161–Cys172, Cys166–Cys182, Cys185–Cys218, Cys189–Cys211, Cys200–Cys232, Cys238–Cys249, Cys243–Cys260, Cys263–Cys295, Cys267–Cys288, and Cys277–Cys309. Residues 87–110 form the Follistatin-like 1 domain; it reads TCENVDCGPGKKCRMNKKNKPRCV. Positions 105–159 constitute a Kazal-like 1 domain; that stretch reads NKPRCVCAPDCSNITWKGPVCGLDGKTYRNECALLKARCKEQPELEVQYQGKCKK. Asn117 carries an N-linked (GlcNAc...) asparagine glycan. The region spanning 160 to 183 is the Follistatin-like 2 domain; the sequence is TCRDVFCPGSSTCVVDQTNNAYCV. In terms of domain architecture, Kazal-like 2 spans 179–234; it reads NAYCVTCNRICPEPTSSEQYLCGNDGVTYPSACHLRKATCLLGRSIGLAYEGKCIK. The 25-residue stretch at 237-261 folds into the Follistatin-like 3 domain; that stretch reads SCEDIQCTGGKKCLWDFKVGRGRCS. The Kazal-like 3 domain maps to 254–311; that stretch reads KVGRGRCSLCGELCPESKSEEPVCASDNATYASECAMKEAACSSGVLLEVKHSGSCNS. Asn281 is a glycosylation site (N-linked (GlcNAc...) asparagine). Positions 309 to 337 are disordered; it reads CNSISEDTEDEEEDEDQDYSFPISSILEW. Positions 314–326 are enriched in acidic residues; the sequence is EDTEDEEEDEDQD.

In terms of assembly, monomer.

The protein resides in the secreted. Functionally, binds directly to activin and functions as an activin antagonist. Specific inhibitor of the biosynthesis and secretion of pituitary follicle stimulating hormone (FSH). This Ovis aries (Sheep) protein is Follistatin.